The chain runs to 381 residues: rRNA adenine N-6-methyltransferase (381 aa).

A compositionally biased stretch (basic and acidic residues) spans 1–19; sequence MSSSDEQPRPRRRNQDRQH. Positions 1 to 42 are disordered; the sequence is MSSSDEQPRPRRRNQDRQHPNQNRPVLGRTERDRNRRQFGQN. Residues N42, L44, G69, E90, D115, and A131 each contribute to the S-adenosyl-L-methionine site. Residues 282–381 are disordered; that stretch reads RLDQKNEPRG…PGRRGGPGQR (100 aa). A compositionally biased stretch (basic and acidic residues) spans 301–358; sequence GGRDHGDRRTGGQDRGDRRTGGRDHRDRQASGHGDRRSSGRNRDDGRTGEREQGDQGG. Over residues 359-381 the composition is skewed to gly residues; that stretch reads RRGPSGGGRTGGRPGRRGGPGQR.

Belongs to the class I-like SAM-binding methyltransferase superfamily. rRNA adenine N(6)-methyltransferase family.

It catalyses the reaction adenosine(2085) in 23S rRNA + 2 S-adenosyl-L-methionine = N(6)-dimethyladenosine(2085) in 23S rRNA + 2 S-adenosyl-L-homocysteine + 2 H(+). Its function is as follows. This protein produces a dimethylation of the adenine residue at position 2085 in 23S rRNA, resulting in reduced affinity between ribosomes and macrolide-lincosamide-streptogramin B antibiotics. The polypeptide is rRNA adenine N-6-methyltransferase (ermE) (Saccharopolyspora erythraea (strain ATCC 11635 / DSM 40517 / JCM 4748 / NBRC 13426 / NCIMB 8594 / NRRL 2338)).